The following is a 692-amino-acid chain: Methionine--tRNA ligase (692 aa).

Residues 15–25 (PYANGPIHLGH) carry the 'HIGH' region motif. Residues Cys-146, Cys-149, Cys-159, and Cys-162 each coordinate Zn(2+). The 'KMSKS' region signature appears at 332 to 336 (KMSKS). An ATP-binding site is contributed by Lys-335. The tract at residues 552–577 (TTEAAPEKKAKKSAETADVAVDTRSP) is disordered. Positions 556-566 (APEKKAKKSAE) are enriched in basic and acidic residues. Residues 591-692 (DFAKLDLRIA…EGAQPGMRVK (102 aa)) enclose the tRNA-binding domain.

Belongs to the class-I aminoacyl-tRNA synthetase family. MetG type 1 subfamily. In terms of assembly, homodimer. The cofactor is Zn(2+).

The protein resides in the cytoplasm. It catalyses the reaction tRNA(Met) + L-methionine + ATP = L-methionyl-tRNA(Met) + AMP + diphosphate. Functionally, is required not only for elongation of protein synthesis but also for the initiation of all mRNA translation through initiator tRNA(fMet) aminoacylation. This Shewanella sediminis (strain HAW-EB3) protein is Methionine--tRNA ligase.